Consider the following 326-residue polypeptide: Ribosomal large subunit pseudouridine synthase D (326 aa).

One can recognise an S4 RNA-binding domain in the interval 18 to 91; sequence QRLDQALAEM…IPLDIVYEDE (74 aa). Asp139 is a catalytic residue.

The protein belongs to the pseudouridine synthase RluA family.

The protein resides in the cytoplasm. The enzyme catalyses uridine(1911/1915/1917) in 23S rRNA = pseudouridine(1911/1915/1917) in 23S rRNA. Its function is as follows. Responsible for synthesis of pseudouridine from uracil at positions 1911, 1915 and 1917 in 23S ribosomal RNA. This is Ribosomal large subunit pseudouridine synthase D (rluD) from Shigella flexneri.